A 243-amino-acid polypeptide reads, in one-letter code: 2-C-methyl-D-erythritol 4-phosphate cytidylyltransferase (243 aa).

This sequence belongs to the IspD/TarI cytidylyltransferase family. IspD subfamily.

The catalysed reaction is 2-C-methyl-D-erythritol 4-phosphate + CTP + H(+) = 4-CDP-2-C-methyl-D-erythritol + diphosphate. The protein operates within isoprenoid biosynthesis; isopentenyl diphosphate biosynthesis via DXP pathway; isopentenyl diphosphate from 1-deoxy-D-xylulose 5-phosphate: step 2/6. Functionally, catalyzes the formation of 4-diphosphocytidyl-2-C-methyl-D-erythritol from CTP and 2-C-methyl-D-erythritol 4-phosphate (MEP). The protein is 2-C-methyl-D-erythritol 4-phosphate cytidylyltransferase of Chlorobium phaeovibrioides (strain DSM 265 / 1930) (Prosthecochloris vibrioformis (strain DSM 265)).